Here is a 707-residue protein sequence, read N- to C-terminus: Drebrin (707 aa).

N-acetylalanine is present on Ala-2. Residues Gly-3–Ser-134 enclose the ADF-H domain. Residues Ser-141 and Ser-142 each carry the phosphoserine modification. A compositionally biased stretch (basic and acidic residues) spans Glu-209–Arg-236. 5 disordered regions span residues Glu-209–Glu-438, Ala-452–Ala-497, Trp-531–Ser-557, Leu-582–Ala-609, and Leu-630–Asp-707. Phosphoserine is present on Ser-241. Residues Asp-288–Glu-298 are compositionally biased toward basic and acidic residues. Positions Ser-329–Pro-343 are enriched in low complexity. At Ser-342 the chain carries Phosphoserine. The span at Arg-355 to Pro-364 shows a compositional bias: polar residues. Phosphothreonine is present on residues Thr-377 and Thr-381. The span at Pro-380 to Thr-395 shows a compositional bias: polar residues. A phosphoserine mark is found at Ser-383, Ser-385, and Ser-391. A Phosphothreonine modification is found at Thr-392. The segment covering Gln-409–Ala-420 has biased composition (pro residues). Basic and acidic residues predominate over residues Pro-428–Glu-438. Position 467 is a phosphoserine (Ser-467). Thr-549 is subject to Phosphothreonine. A compositionally biased stretch (polar residues) spans Asn-639–Ser-652. Ser-659 is modified (phosphoserine). The segment covering Pro-695–Asp-707 has biased composition (acidic residues).

In terms of assembly, interacts with RUFY. Interacts with CXCR4; this interaction is enhanced by antigenic stimulation. Interacts (via ADF-H domain) with ZMYND8 (via N-terminus); the interaction leads to sequestering of ZMYND8 in the cytoplasm. Post-translationally, ISGylated. Brain neurons.

It localises to the cytoplasm. The protein resides in the cell projection. Its subcellular location is the dendrite. It is found in the cell cortex. The protein localises to the cell junction. It localises to the growth cone. Actin cytoskeleton-organizing protein that plays a role in the formation of cell projections. Required for actin polymerization at immunological synapses (IS) and for the recruitment of the chemokine receptor CXCR4 to IS. Plays a role in dendritic spine morphogenesis and organization, including the localization of the dopamine receptor DRD1 to the dendritic spines. Involved in memory-related synaptic plasticity in the hippocampus. This chain is Drebrin (Dbn1), found in Rattus norvegicus (Rat).